The primary structure comprises 87 residues: Toxin CsEv3 (87 aa).

The first 19 residues, 1-19 (MNSLLMITACLFLIGTVWA), serve as a signal peptide directing secretion. Positions 20–85 (KEGYLVNKST…TYPLPNKSCG (66 aa)) constitute an LCN-type CS-alpha/beta domain. Intrachain disulfides connect Cys31-Cys84, Cys35-Cys60, Cys44-Cys65, and Cys48-Cys67. Cys84 is modified (cysteine amide).

Belongs to the long (4 C-C) scorpion toxin superfamily. Sodium channel inhibitor family. Beta subfamily. Expressed by the venom gland.

The protein localises to the secreted. Beta toxins bind voltage-independently at site-4 of sodium channels (Nav) and shift the voltage of activation toward more negative potentials thereby affecting sodium channel activation and promoting spontaneous and repetitive firing. Induces immediate paralysis in crickets after injection, with a total paralysis occurring within 15-30 minutes and lasting for 1-2 hours. Is also lethal to vertebrate (chicks) when injected in very high dosages (more that 100 mg/kg). In Centruroides sculpturatus (Arizona bark scorpion), this protein is Toxin CsEv3.